The primary structure comprises 270 residues: 5-amino-6-(5-phospho-D-ribitylamino)uracil phosphatase YitU (270 aa).

The Nucleophile role is filled by D11. A Mg(2+)-binding site is contributed by D11. Residue L12 coordinates phosphate. Residue D13 coordinates Mg(2+). Phosphate is bound by residues 45–46 (TG) and K197. D220 serves as a coordination point for Mg(2+). Residue N223 participates in phosphate binding.

Belongs to the HAD-like hydrolase superfamily. Cof family. Requires Mg(2+) as cofactor.

The enzyme catalyses 5-amino-6-(5-phospho-D-ribitylamino)uracil + H2O = 5-amino-6-(D-ribitylamino)uracil + phosphate. The protein operates within cofactor biosynthesis; riboflavin biosynthesis; 5-amino-6-(D-ribitylamino)uracil from GTP: step 4/4. Catalyzes the dephosphorylation of the riboflavin precursor 5-amino-6-(5-phospho-D-ribitylamino)uracil and of flavin mononucleotide (FMN) in vitro. This is 5-amino-6-(5-phospho-D-ribitylamino)uracil phosphatase YitU (yitU) from Bacillus subtilis (strain 168).